A 964-amino-acid chain; its full sequence is Collagen alpha-1(I) chain (964 aa).

The interval G1–P964 is disordered. Residues P18, P21, P24, P33, P36, P39, P53, P68, P74, P83, and P89 each carry the 4-hydroxyproline modification. Positions N56 to E70 are enriched in basic and acidic residues. K92 carries the 5-hydroxylysine; alternate modification. K92 carries O-linked (Gal...) hydroxylysine; alternate glycosylation. S98 is subject to Phosphoserine. Low complexity-rich tracts occupy residues D106–P117 and P126–A144. P126, P147, P156, P159, P186, P189, P201, P207, P216, P222, P225, and P240 each carry 4-hydroxyproline. Over residues P146–F158 the composition is skewed to pro residues. Over residues A192–S231 the composition is skewed to low complexity. 5-hydroxylysine is present on K243. Residues P249, P252, P260, P269, P284, P290, P299, and P305 each carry the 4-hydroxyproline modification. Positions G294–G303 are enriched in gly residues. 5-hydroxylysine is present on K314. P323, P332, P338, P344, P353, P356, P365, P374, P379, P391, P400, P409, P412, P430, P447, P453, P459, P465, P471, P477, P489, P498, P510, and P519 each carry 4-hydroxyproline. The segment covering K347 to R373 has biased composition (low complexity). Residues A381–P400 show a composition bias toward low complexity. A compositionally biased stretch (low complexity) spans P459–Q468. 5-hydroxylysine is present on K531. 4-hydroxyproline occurs at positions 537, 552, and 558. Residues S564–A578 are compositionally biased toward low complexity. A Phosphoserine modification is found at S567. 4-hydroxyproline occurs at positions 579, 585, 588, 597, 603, 621, 630, and 639. Residues A591–A618 show a composition bias toward low complexity. Positions P620 to P632 are enriched in pro residues. K642 carries the post-translational modification 5-hydroxylysine. A compositionally biased stretch (low complexity) spans S647–V663. 4-hydroxyproline is present on residues P651 and P657. P665 carries the post-translational modification 3-hydroxyproline. Residues P666, P675, P678, P704, P712, P721, P739, P748, P751, P757, P772, P778, P784, P792, and P798 each carry the 4-hydroxyproline modification. Positions K709 to P721 are enriched in low complexity. The span at P771 to A781 shows a compositional bias: pro residues. K807 carries the post-translational modification 5-hydroxylysine. The span at P815–V830 shows a compositional bias: pro residues. 4-hydroxyproline occurs at positions 818, 821, and 824. A compositionally biased stretch (low complexity) spans A850–P864. A compositionally biased stretch (basic and acidic residues) spans R865–I879. K868 bears the 5-hydroxylysine mark. K880 carries the 5-hydroxylysine; alternate modification. Residue K880 is glycosylated (O-linked (Gal...) hydroxylysine; alternate). P895, P898, P916, and P931 each carry 4-hydroxyproline. Low complexity predominate over residues P898–P931. Residue P936 is modified to 3-hydroxyproline. P937 carries the 4-hydroxyproline modification. A compositionally biased stretch (pro residues) spans V949 to P964. Position 951 is a 3-hydroxyproline (P951). At P952 the chain carries 4-hydroxyproline. P954 is modified (3-hydroxyproline). The residue at position 955 (P955) is a 4-hydroxyproline. P957 is subject to 3-hydroxyproline. 4-hydroxyproline is present on residues P958, P961, and P964.

It belongs to the fibrillar collagen family. In terms of assembly, trimers of one alpha 2(I) and two alpha 1(I) chains. Contains mostly 4-hydroxyproline. Proline residues at the third position of the tripeptide repeating unit (G-X-Y) are hydroxylated in some or all of the chains. Post-translationally, contains 3-hydroxyproline at a few sites. This modification occurs on the first proline residue in the sequence motif Gly-Pro-Hyp, where Hyp is 4-hydroxyproline. In terms of processing, lysine residues at the third position of the tripeptide repeating unit (G-X-Y) are 5-hydroxylated in some or all of the chains. O-glycosylated on hydroxylated lysine residues. The O-linked glycan consists of a Glc-Gal disaccharide. Expressed in bones.

The protein localises to the secreted. The protein resides in the extracellular space. Its subcellular location is the extracellular matrix. Functionally, type I collagen is a member of group I collagen (fibrillar forming collagen). The protein is Collagen alpha-1(I) chain of Parocnus serus (Greater Haitian ground sloth).